The following is a 511-amino-acid chain: Bifunctional purine biosynthesis protein PurH (511 aa).

Residues 1 to 145 form the MGS-like domain; sequence MKKRALVSVS…KNHKFVSVIV (145 aa).

Belongs to the PurH family.

It catalyses the reaction (6R)-10-formyltetrahydrofolate + 5-amino-1-(5-phospho-beta-D-ribosyl)imidazole-4-carboxamide = 5-formamido-1-(5-phospho-D-ribosyl)imidazole-4-carboxamide + (6S)-5,6,7,8-tetrahydrofolate. It carries out the reaction IMP + H2O = 5-formamido-1-(5-phospho-D-ribosyl)imidazole-4-carboxamide. It functions in the pathway purine metabolism; IMP biosynthesis via de novo pathway; 5-formamido-1-(5-phospho-D-ribosyl)imidazole-4-carboxamide from 5-amino-1-(5-phospho-D-ribosyl)imidazole-4-carboxamide (10-formyl THF route): step 1/1. It participates in purine metabolism; IMP biosynthesis via de novo pathway; IMP from 5-formamido-1-(5-phospho-D-ribosyl)imidazole-4-carboxamide: step 1/1. The chain is Bifunctional purine biosynthesis protein PurH from Bacillus cytotoxicus (strain DSM 22905 / CIP 110041 / 391-98 / NVH 391-98).